The chain runs to 116 residues: Iron-sulfur cluster insertion protein ErpA (116 aa).

Iron-sulfur cluster-binding residues include Cys44, Cys108, and Cys110.

Belongs to the HesB/IscA family. In terms of assembly, homodimer. Iron-sulfur cluster is required as a cofactor.

Functionally, required for insertion of 4Fe-4S clusters for at least IspG. The chain is Iron-sulfur cluster insertion protein ErpA from Francisella philomiragia subsp. philomiragia (strain ATCC 25017 / CCUG 19701 / FSC 153 / O#319-036).